A 365-amino-acid polypeptide reads, in one-letter code: Serpentine receptor class epsilon-38 (365 aa).

Helical transmembrane passes span 26-46 (GMYLYLLLTEILLYVGTGVII), 65-85 (IMTALFLCQWFEAIAAKLLII), 124-144 (ALVISGFLIWHYAYTMIFGIL), 168-188 (IPVFLITSTHLITLTFSYFVL), 196-216 (LGTSPCFLNSALVVMTFLAVW), 256-276 (LVIVVLCAISVPCALLICLVI), and 285-305 (IFIHIMENFIYLNPVIICSTL).

This sequence belongs to the nematode receptor-like protein sre family.

It is found in the membrane. This chain is Serpentine receptor class epsilon-38 (sre-38), found in Caenorhabditis elegans.